Here is a 139-residue protein sequence, read N- to C-terminus: Gastrula zinc finger protein XlCGF67.1 (139 aa).

5 C2H2-type zinc fingers span residues 6–28 (VSCPECGKCFTSRTYLNVHKKVH), 33–55 (YSCSECGKSFLSRSHLNTHLRTH), 61–83 (YSCSECGKCFTSSAILITHKRIH), 89–111 (FSCQECGKSFSYRSVFMEHQKIH), and 117–139 (FSCSDCGKCFRYRSHLKVHSRIH).

Belongs to the krueppel C2H2-type zinc-finger protein family.

Its subcellular location is the nucleus. In terms of biological role, may be involved in transcriptional regulation. The sequence is that of Gastrula zinc finger protein XlCGF67.1 from Xenopus laevis (African clawed frog).